We begin with the raw amino-acid sequence, 199 residues long: Crossover junction endodeoxyribonuclease RuvC (199 aa).

Catalysis depends on residues Asp-17, Glu-76, and Asp-148. Positions 17, 76, and 148 each coordinate Mg(2+).

It belongs to the RuvC family. Homodimer which binds Holliday junction (HJ) DNA. The HJ becomes 2-fold symmetrical on binding to RuvC with unstacked arms; it has a different conformation from HJ DNA in complex with RuvA. In the full resolvosome a probable DNA-RuvA(4)-RuvB(12)-RuvC(2) complex forms which resolves the HJ. Mg(2+) serves as cofactor.

It localises to the cytoplasm. It catalyses the reaction Endonucleolytic cleavage at a junction such as a reciprocal single-stranded crossover between two homologous DNA duplexes (Holliday junction).. In terms of biological role, the RuvA-RuvB-RuvC complex processes Holliday junction (HJ) DNA during genetic recombination and DNA repair. Endonuclease that resolves HJ intermediates. Cleaves cruciform DNA by making single-stranded nicks across the HJ at symmetrical positions within the homologous arms, yielding a 5'-phosphate and a 3'-hydroxyl group; requires a central core of homology in the junction. The consensus cleavage sequence is 5'-(A/T)TT(C/G)-3'. Cleavage occurs on the 3'-side of the TT dinucleotide at the point of strand exchange. HJ branch migration catalyzed by RuvA-RuvB allows RuvC to scan DNA until it finds its consensus sequence, where it cleaves and resolves the cruciform DNA. In Mannheimia succiniciproducens (strain KCTC 0769BP / MBEL55E), this protein is Crossover junction endodeoxyribonuclease RuvC.